A 243-amino-acid chain; its full sequence is Carboxy-S-adenosyl-L-methionine synthase (243 aa).

S-adenosyl-L-methionine-binding positions include Tyr-40, 65-67, 90-91, 118-119, Asn-133, and Arg-200; these read GCS, DN, and DI.

The protein belongs to the class I-like SAM-binding methyltransferase superfamily. Cx-SAM synthase family. In terms of assembly, homodimer.

It catalyses the reaction prephenate + S-adenosyl-L-methionine = carboxy-S-adenosyl-L-methionine + 3-phenylpyruvate + H2O. Functionally, catalyzes the conversion of S-adenosyl-L-methionine (SAM) to carboxy-S-adenosyl-L-methionine (Cx-SAM). This Shewanella piezotolerans (strain WP3 / JCM 13877) protein is Carboxy-S-adenosyl-L-methionine synthase.